The sequence spans 236 residues: Small ribosomal subunit protein uS2c (236 aa).

This sequence belongs to the universal ribosomal protein uS2 family.

Its subcellular location is the plastid. It localises to the chloroplast. The sequence is that of Small ribosomal subunit protein uS2c (rps2) from Saccharum hybrid (Sugarcane).